A 445-amino-acid polypeptide reads, in one-letter code: Proline--tRNA ligase (445 aa).

Belongs to the class-II aminoacyl-tRNA synthetase family. ProS type 2 subfamily. As to quaternary structure, homodimer.

The protein localises to the cytoplasm. The enzyme catalyses tRNA(Pro) + L-proline + ATP = L-prolyl-tRNA(Pro) + AMP + diphosphate. Its function is as follows. Catalyzes the attachment of proline to tRNA(Pro) in a two-step reaction: proline is first activated by ATP to form Pro-AMP and then transferred to the acceptor end of tRNA(Pro). This chain is Proline--tRNA ligase, found in Cereibacter sphaeroides (strain ATCC 17023 / DSM 158 / JCM 6121 / CCUG 31486 / LMG 2827 / NBRC 12203 / NCIMB 8253 / ATH 2.4.1.) (Rhodobacter sphaeroides).